A 66-amino-acid chain; its full sequence is Small ribosomal subunit protein bS21 (66 aa).

Belongs to the bacterial ribosomal protein bS21 family.

This is Small ribosomal subunit protein bS21 from Rickettsia africae (strain ESF-5).